A 287-amino-acid chain; its full sequence is ATP synthase gamma chain (287 aa).

The protein belongs to the ATPase gamma chain family. As to quaternary structure, F-type ATPases have 2 components, CF(1) - the catalytic core - and CF(0) - the membrane proton channel. CF(1) has five subunits: alpha(3), beta(3), gamma(1), delta(1), epsilon(1). CF(0) has three main subunits: a, b and c.

The protein resides in the cell inner membrane. Its function is as follows. Produces ATP from ADP in the presence of a proton gradient across the membrane. The gamma chain is believed to be important in regulating ATPase activity and the flow of protons through the CF(0) complex. The polypeptide is ATP synthase gamma chain (Geobacter metallireducens (strain ATCC 53774 / DSM 7210 / GS-15)).